A 483-amino-acid chain; its full sequence is Putative (R)-citramalate synthase CimA (483 aa).

The region spanning 1 to 245 is the Pyruvate carboxyltransferase domain; the sequence is MRDGEQTPGV…DTGIKHEQIY (245 aa).

This sequence belongs to the alpha-IPM synthase/homocitrate synthase family. Homodimer.

It carries out the reaction pyruvate + acetyl-CoA + H2O = (3R)-citramalate + CoA + H(+). The protein operates within amino-acid biosynthesis; L-isoleucine biosynthesis; 2-oxobutanoate from pyruvate: step 1/3. In terms of biological role, catalyzes the condensation of pyruvate and acetyl-coenzyme A to form (R)-citramalate. The sequence is that of Putative (R)-citramalate synthase CimA from Methanosarcina acetivorans (strain ATCC 35395 / DSM 2834 / JCM 12185 / C2A).